Consider the following 166-residue polypeptide: Interferon gamma-related (166 aa).

Positions 1–26 (MYCRLNMVYLICALLLIVSLQGTVGA) are cleaved as a signal peptide. An N-linked (GlcNAc...) asparagine glycan is attached at N91.

The protein belongs to the type II (or gamma) interferon family. In terms of assembly, homodimer. Strongly expressed in spleen. Also detected at lower levels in gill, kidney, heart, brain and intestine. In immune cell populations, expressed at highest levels in peripheral blood leukocytes and at lower levels in splenocytes, granulocytes, monocytes and macrophages.

It localises to the secreted. Cytokine which binds to interferon gamma receptor 1 (ifngr1). Has activating effects on primary macrophages. Induces nitric oxide production and phagocytic responses in macrophages. Primes monocytes for production of reactive oxygen intermediates (ROI), although the effect is short-lived. Also has inhibitory effects on monocyte priming by ifng1 (interferon gamma 1) and tnfb (TNF-alpha 2). Stimulates phosphorylation of the JAK/STAT signal transducer stat1, but fails to induce stat1 nuclear localization. Promotes increased expression of a number of genes important for macrophage activity, including the interferon regulatory factors irf2 and irf9. This chain is Interferon gamma-related, found in Carassius auratus (Goldfish).